A 136-amino-acid chain; its full sequence is Holo-[acyl-carrier-protein] synthase (136 aa).

Mg(2+) is bound by residues aspartate 8 and glutamate 57.

It belongs to the P-Pant transferase superfamily. AcpS family. Requires Mg(2+) as cofactor.

The protein localises to the cytoplasm. It carries out the reaction apo-[ACP] + CoA = holo-[ACP] + adenosine 3',5'-bisphosphate + H(+). Functionally, transfers the 4'-phosphopantetheine moiety from coenzyme A to a Ser of acyl-carrier-protein. The sequence is that of Holo-[acyl-carrier-protein] synthase from Azorhizobium caulinodans (strain ATCC 43989 / DSM 5975 / JCM 20966 / LMG 6465 / NBRC 14845 / NCIMB 13405 / ORS 571).